The sequence spans 143 residues: Sirohydrochlorin cobaltochelatase (143 aa).

Histidine 9 serves as the catalytic Proton acceptor. Histidine 9 lines the Co(2+) pocket. Position 9 (histidine 9) interacts with Ni(2+). Residues glutamate 45 and 70 to 75 (LAHGVH) contribute to the substrate site. Histidine 75 contributes to the Co(2+) binding site. Residue histidine 75 participates in Ni(2+) binding.

This sequence belongs to the CbiX family. CbiXS subfamily. In terms of assembly, homotetramer; dimer of dimers.

The catalysed reaction is Co-sirohydrochlorin + 2 H(+) = sirohydrochlorin + Co(2+). It carries out the reaction Ni-sirohydrochlorin + 2 H(+) = sirohydrochlorin + Ni(2+). The protein operates within cofactor biosynthesis; adenosylcobalamin biosynthesis; cob(II)yrinate a,c-diamide from sirohydrochlorin (anaerobic route): step 1/10. Catalyzes the insertion of Co(2+) into sirohydrochlorin as part of the anaerobic pathway to cobalamin biosynthesis. Involved in the biosynthesis of the unique nickel-containing tetrapyrrole coenzyme F430, the prosthetic group of methyl-coenzyme M reductase (MCR), which plays a key role in methanogenesis and anaerobic methane oxidation. Catalyzes the insertion of Ni(2+) into sirohydrochlorin to yield Ni-sirohydrochlorin. The polypeptide is Sirohydrochlorin cobaltochelatase (Methanopyrus kandleri (strain AV19 / DSM 6324 / JCM 9639 / NBRC 100938)).